We begin with the raw amino-acid sequence, 469 residues long: Glutamate--tRNA ligase (469 aa).

The short motif at 12 to 22 is the 'HIGH' region element; that stretch reads PSPTGFIHLGN. The 'KMSKS' region motif lies at 244–248; that stretch reads KMSKR. Position 247 (K247) interacts with ATP.

It belongs to the class-I aminoacyl-tRNA synthetase family. Glutamate--tRNA ligase type 1 subfamily. As to quaternary structure, monomer.

The protein resides in the cytoplasm. It catalyses the reaction tRNA(Glu) + L-glutamate + ATP = L-glutamyl-tRNA(Glu) + AMP + diphosphate. Its function is as follows. Catalyzes the attachment of glutamate to tRNA(Glu) in a two-step reaction: glutamate is first activated by ATP to form Glu-AMP and then transferred to the acceptor end of tRNA(Glu). The sequence is that of Glutamate--tRNA ligase from Acidovorax sp. (strain JS42).